We begin with the raw amino-acid sequence, 193 residues long: Riboflavin kinase (193 aa).

An H-T-H motif-like region spans residues 1–59; that stretch reads MGISQQAASQHLRELEDEGLITRNAEGKGISVMVTDKGRHELLRVYNILHDSLHSRPDH. The segment at 60–193 is riboflavin kinase; it reads VEITGTLVSG…TIRIPLEQED (134 aa). 69–74 lines the CDP pocket; the sequence is GMNEGA. T98 and N100 together coordinate Mg(2+). FMN contacts are provided by T156 and E164. 169-172 lines the CDP pocket; it reads LDIR.

This sequence belongs to the archaeal riboflavin kinase family. Mg(2+) serves as cofactor.

The enzyme catalyses riboflavin + CTP = CDP + FMN + H(+). It participates in cofactor biosynthesis; FMN biosynthesis; FMN from riboflavin (CTP route): step 1/1. Catalyzes the CTP-dependent phosphorylation of riboflavin (vitamin B2) to form flavin mononucleotide (FMN). The sequence is that of Riboflavin kinase (ribK) from Cenarchaeum symbiosum (strain A).